Reading from the N-terminus, the 261-residue chain is Peroxiredoxin PRX1, mitochondrial (261 aa).

Residues 1-13 constitute a mitochondrion transit peptide; sequence MFSRICSAQLKRT. Residues 49–212 form the Thioredoxin domain; sequence LRINSDAPNF…VLRVIDALQL (164 aa). A Phosphoserine modification is found at Ser53. The active-site Cysteine sulfenic acid (-SOH) intermediate is the Cys91.

The protein belongs to the peroxiredoxin family. Prx6 subfamily. Homodimer; disulfide-linked.

The protein localises to the mitochondrion. It catalyses the reaction a hydroperoxide + 2 glutathione = an alcohol + glutathione disulfide + H2O. The enzyme catalyses [glutaredoxin]-dithiol + a hydroperoxide = [glutaredoxin]-disulfide + an alcohol + H2O. Functionally, thiol-specific peroxidase that catalyzes the reduction of hydrogen peroxide and organic hydroperoxides to water and alcohols, respectively. Plays a role in cell protection against oxidative stress by detoxifying peroxides and as sensor of hydrogen peroxide-mediated signaling events. Involved in mitochondrial protection of cadmium-induced oxidative stress. The protein is Peroxiredoxin PRX1, mitochondrial of Saccharomyces cerevisiae (strain ATCC 204508 / S288c) (Baker's yeast).